Here is a 642-residue protein sequence, read N- to C-terminus: MVAGKVRVTMGFHKSPSTKKTKDMPSPLPLPPPPPPPLKPPSSGSATTKPPINPSKPGFTRSFGVYFPRASAQVHATAAAASHNGVVSELRRQVEELREREALLKTENLEVKLLRESVSVIPLLESQIADKNGEIDELRKETARLAEDNERLRREFDRSEEMRRECETREKEMEAEIVELRKLVSSESDDHALSVSQRFQGLMDVSAKSNLIRSLKRVGSLRNLPEPITNQENTNKSISSSGDADGDIYRKDEIESYSRSSNSEELTESSSLSTVRSRVPRVPKPPPKRSISLGDSTENRADPPPQKSIPPPPPPPPPPLLQQPPPPPSVSKAPPPPPPPPPPKSLSIASAKVRRVPEVVEFYHSLMRRDSTNSRRDSTGGGNAAAEAILANSNARDMIGEIENRSVYLLAIKTDVETQGDFIRFLIKEVGNAAFSDIEDVVPFVKWLDDELSYLVDERAVLKHFEWPEQKADALREAAFCYFDLKKLISEASRFREDPRQSSSSALKKMQALFEKLEHGVYSLSRMRESAATKFKSFQIPVDWMLETGITSQIKLASVKLAMKYMKRVSAELEAIEGGGPEEEELIVQGVRFAFRVHQFAGGFDAETMKAFEELRDKARSCHVQCQSQTHQHKLCFRSTPC.

The disordered stretch occupies residues 1–60 (MVAGKVRVTMGFHKSPSTKKTKDMPSPLPLPPPPPPPLKPPSSGSATTKPPINPSKPGFT). Pro residues predominate over residues 26–40 (SPLPLPPPPPPPLKP). The stretch at 80-183 (AASHNGVVSE…EAEIVELRKL (104 aa)) forms a coiled coil. A disordered region spans residues 223 to 351 (NLPEPITNQE…PPKSLSIASA (129 aa)). Residues 247–256 (DIYRKDEIES) show a composition bias toward basic and acidic residues. The span at 258 to 277 (SRSSNSEELTESSSLSTVRS) shows a compositional bias: low complexity. The segment covering 302–344 (DPPPQKSIPPPPPPPPPPLLQQPPPPPSVSKAPPPPPPPPPPK) has biased composition (pro residues).

It belongs to the IPGA1 family. In terms of assembly, associates to cortical microtubules via its N-terminal region. Interacts with ANGUSTIFOLIA (AN) on microtubule upon mechanical stress to regulate microtubule organization. Binds to the microtubule-severing enzyme KATANIN (KTN1). Expressed ubiquitously at all development stages, with highest in developing petals. During mechanical stress, accumulates in granules on microtubules.

It is found in the cytoplasm. Its subcellular location is the cytoskeleton. It localises to the cytosol. The protein resides in the cell membrane. Microtubule-associated protein involved in the regulation of anisotropic petal and cotyledons growth and shape by affecting cortical microtubule organization. Prevents cortical microtubules organization into parallel arrays oriented perpendicular to the axis of cell elongation thus limiting anisotropic cell growth in the late phases of petal development. Cooperatively with ANGUSTIFOLIA (AN), negatively regulates cortical microtubules (CMTs) organization in response to mechanical stress and modulates pavement cells morphogenesis leading to puzzle shape, probably in an AAA1/KTN1-dependent manner. The chain is Protein INCREASED PETAL GROWTH ANISOTROPY 1 from Arabidopsis thaliana (Mouse-ear cress).